The following is a 110-amino-acid chain: uncharacterized protein (110 aa).

Residues glycine 29 to leucine 49 traverse the membrane as a helical segment.

The protein localises to the membrane. This is an uncharacterized protein from Saccharomyces cerevisiae (strain ATCC 204508 / S288c) (Baker's yeast).